Here is a 406-residue protein sequence, read N- to C-terminus: DNA primase large subunit PriL (406 aa).

Residues C302, C375, C384, and C389 each contribute to the [4Fe-4S] cluster site.

It belongs to the eukaryotic-type primase large subunit family. As to quaternary structure, heterodimer of a small subunit (PriS) and a large subunit (PriL). [4Fe-4S] cluster serves as cofactor.

Its function is as follows. Regulatory subunit of DNA primase, an RNA polymerase that catalyzes the synthesis of short RNA molecules used as primers for DNA polymerase during DNA replication. Stabilizes and modulates the activity of the small subunit, increasing the rate of DNA synthesis, and conferring RNA synthesis capability. The DNA polymerase activity may enable DNA primase to also catalyze primer extension after primer synthesis. May also play a role in DNA repair. The chain is DNA primase large subunit PriL from Methanopyrus kandleri (strain AV19 / DSM 6324 / JCM 9639 / NBRC 100938).